The sequence spans 621 residues: tRNA uridine 5-carboxymethylaminomethyl modification enzyme MnmG (621 aa).

Residue 9 to 14 participates in FAD binding; sequence GGGHAG. 270–284 provides a ligand contact to NAD(+); sequence GPRYCPSIEDKIVKF.

The protein belongs to the MnmG family. In terms of assembly, homodimer. Heterotetramer of two MnmE and two MnmG subunits. FAD serves as cofactor.

It is found in the cytoplasm. NAD-binding protein involved in the addition of a carboxymethylaminomethyl (cmnm) group at the wobble position (U34) of certain tRNAs, forming tRNA-cmnm(5)s(2)U34. This is tRNA uridine 5-carboxymethylaminomethyl modification enzyme MnmG from Borrelia garinii subsp. bavariensis (strain ATCC BAA-2496 / DSM 23469 / PBi) (Borreliella bavariensis).